We begin with the raw amino-acid sequence, 280 residues long: Phosphatidylserine decarboxylase proenzyme (280 aa).

Catalysis depends on charge relay system; for autoendoproteolytic cleavage activity residues Asp88, His145, and Ser248. Catalysis depends on Ser248, which acts as the Schiff-base intermediate with substrate; via pyruvic acid; for decarboxylase activity. Ser248 carries the pyruvic acid (Ser); by autocatalysis modification.

It belongs to the phosphatidylserine decarboxylase family. PSD-B subfamily. Prokaryotic type I sub-subfamily. Heterodimer of a large membrane-associated beta subunit and a small pyruvoyl-containing alpha subunit. It depends on pyruvate as a cofactor. Post-translationally, is synthesized initially as an inactive proenzyme. Formation of the active enzyme involves a self-maturation process in which the active site pyruvoyl group is generated from an internal serine residue via an autocatalytic post-translational modification. Two non-identical subunits are generated from the proenzyme in this reaction, and the pyruvate is formed at the N-terminus of the alpha chain, which is derived from the carboxyl end of the proenzyme. The autoendoproteolytic cleavage occurs by a canonical serine protease mechanism, in which the side chain hydroxyl group of the serine supplies its oxygen atom to form the C-terminus of the beta chain, while the remainder of the serine residue undergoes an oxidative deamination to produce ammonia and the pyruvoyl prosthetic group on the alpha chain. During this reaction, the Ser that is part of the protease active site of the proenzyme becomes the pyruvoyl prosthetic group, which constitutes an essential element of the active site of the mature decarboxylase.

The protein localises to the cell membrane. The enzyme catalyses a 1,2-diacyl-sn-glycero-3-phospho-L-serine + H(+) = a 1,2-diacyl-sn-glycero-3-phosphoethanolamine + CO2. It participates in phospholipid metabolism; phosphatidylethanolamine biosynthesis; phosphatidylethanolamine from CDP-diacylglycerol: step 2/2. Its function is as follows. Catalyzes the formation of phosphatidylethanolamine (PtdEtn) from phosphatidylserine (PtdSer). This chain is Phosphatidylserine decarboxylase proenzyme, found in Methylobacillus flagellatus (strain ATCC 51484 / DSM 6875 / VKM B-1610 / KT).